We begin with the raw amino-acid sequence, 67 residues long: Major cold shock protein (67 aa).

A CSD domain is found at 4 to 63; that stretch reads GTVKWFNAEKGFGFISTENGQDVFAHFSAIQTNGFKTLEEGQKVAFDVEEGQRGPQAVNI.

Homodimer.

The protein localises to the cytoplasm. This chain is Major cold shock protein (cspA), found in Streptococcus pyogenes serotype M3 (strain ATCC BAA-595 / MGAS315).